Here is a 98-residue protein sequence, read N- to C-terminus: MATTKYEVTYIIKPDVDEESKKALVENYDKVIADNGGTMVESKDWGKRRFAYEIDKYREGTYHIMTFTADNADAVNEFGRLSKIDNMILRSMTVKLDK.

The protein belongs to the bacterial ribosomal protein bS6 family.

Functionally, binds together with bS18 to 16S ribosomal RNA. This is Small ribosomal subunit protein bS6 from Lactobacillus helveticus (strain DPC 4571).